Reading from the N-terminus, the 166-residue chain is Putative signal peptidase complex catalytic subunit SEC11B (166 aa).

Over 1 to 6 (MNKWRL) the chain is Cytoplasmic. Residues 7 to 24 (YYQVLNFGMIVSSALMIW) traverse the membrane as a helical; Signal-anchor for type II membrane protein segment. Over 25–166 (KGLMVITGSE…LGLFVLVHRE (142 aa)) the chain is Extracellular. S43 is an active-site residue.

This sequence belongs to the peptidase S26B family.

It is found in the membrane. It catalyses the reaction Cleavage of hydrophobic, N-terminal signal or leader sequences from secreted and periplasmic proteins.. Functionally, putative component of some signal peptidase complex which removes signal peptides from nascent proteins as they are translocated into the lumen of the endoplasmic reticulum. The sequence is that of Putative signal peptidase complex catalytic subunit SEC11B (SEC11B) from Homo sapiens (Human).